The following is an 847-amino-acid chain: Beta-hexosaminidase (847 aa).

Disulfide bonds link Cys31–Cys40, Cys377–Cys385, and Cys484–Cys530. Glu519 serves as the catalytic Proton donor.

This sequence belongs to the glycosyl hydrolase 20 family.

It catalyses the reaction Hydrolysis of terminal non-reducing N-acetyl-D-hexosamine residues in N-acetyl-beta-D-hexosaminides.. It participates in glycan degradation; chitin degradation. In terms of biological role, hydrolysis of terminal, non-reducing N-acetyl-beta-D-glucosamine residues in chitobiose and higher analogs, and in glycoproteins. This chain is Beta-hexosaminidase (hex), found in Vibrio vulnificus.